A 382-amino-acid chain; its full sequence is ATP phosphoribosyltransferase regulatory subunit (382 aa).

It belongs to the class-II aminoacyl-tRNA synthetase family. HisZ subfamily. In terms of assembly, heteromultimer composed of HisG and HisZ subunits.

Its subcellular location is the cytoplasm. It participates in amino-acid biosynthesis; L-histidine biosynthesis; L-histidine from 5-phospho-alpha-D-ribose 1-diphosphate: step 1/9. Functionally, required for the first step of histidine biosynthesis. May allow the feedback regulation of ATP phosphoribosyltransferase activity by histidine. The sequence is that of ATP phosphoribosyltransferase regulatory subunit from Albidiferax ferrireducens (strain ATCC BAA-621 / DSM 15236 / T118) (Rhodoferax ferrireducens).